The chain runs to 572 residues: Phosphoenolpyruvate-protein phosphotransferase (572 aa).

Residue H190 is the Tele-phosphohistidine intermediate of the active site. Phosphoenolpyruvate contacts are provided by R297 and R333. Mg(2+) is bound by residues E432 and D456. Phosphoenolpyruvate is bound by residues 455–456 (ND) and R466. The active-site Proton donor is C503.

This sequence belongs to the PEP-utilizing enzyme family. As to quaternary structure, homodimer. It depends on Mg(2+) as a cofactor.

It is found in the cytoplasm. It catalyses the reaction L-histidyl-[protein] + phosphoenolpyruvate = N(pros)-phospho-L-histidyl-[protein] + pyruvate. In terms of biological role, general (non sugar-specific) component of the phosphoenolpyruvate-dependent sugar phosphotransferase system (sugar PTS). This major carbohydrate active-transport system catalyzes the phosphorylation of incoming sugar substrates concomitantly with their translocation across the cell membrane. Enzyme I transfers the phosphoryl group from phosphoenolpyruvate (PEP) to the phosphoryl carrier protein (HPr). The sequence is that of Phosphoenolpyruvate-protein phosphotransferase (ptsI) from Listeria monocytogenes serovar 1/2a (strain ATCC BAA-679 / EGD-e).